Here is a 432-residue protein sequence, read N- to C-terminus: Homogentisate 1,2-dioxygenase (432 aa).

Fe cation-binding residues include histidine 333, glutamate 339, and histidine 369.

This sequence belongs to the homogentisate dioxygenase family. Fe cation serves as cofactor.

It catalyses the reaction homogentisate + O2 = 4-maleylacetoacetate + H(+). The protein operates within amino-acid degradation; L-phenylalanine degradation; acetoacetate and fumarate from L-phenylalanine: step 4/6. This chain is Homogentisate 1,2-dioxygenase (hgd), found in Dictyostelium discoideum (Social amoeba).